The primary structure comprises 440 residues: Protein disulfide-isomerase 2-3 (440 aa).

A signal peptide spans 1-24; the sequence is MYKSPLTLLTLLTICFGFFDLSSA. Thioredoxin domains are found at residues 25 to 136 and 154 to 269; these read LYGS…KQIK and SKEK…ELVE. Catalysis depends on nucleophile residues C60 and C63. A disulfide bond links C60 and C63. The tract at residues 143-163 is disordered; it reads LEGKSKPTGGGSKEKKSEPSA. N168 carries an N-linked (GlcNAc...) asparagine glycan. Residues C192 and C195 each act as nucleophile in the active site. C192 and C195 are joined by a disulfide. The Prevents secretion from ER motif lies at 437–440; sequence KDEL.

The protein belongs to the protein disulfide isomerase family. Widely expressed.

It localises to the endoplasmic reticulum lumen. The enzyme catalyses Catalyzes the rearrangement of -S-S- bonds in proteins.. Its function is as follows. Acts as a protein-folding catalyst that interacts with nascent polypeptides to catalyze the formation, isomerization, and reduction or oxidation of disulfide bonds. The protein is Protein disulfide-isomerase 2-3 (PDIL2-3) of Arabidopsis thaliana (Mouse-ear cress).